The chain runs to 265 residues: Phosphonates import ATP-binding protein PhnC 1 (265 aa).

One can recognise an ABC transporter domain in the interval 3–247 (LRLSAIDLRH…HLDTLYANEQ (245 aa)). 36-43 (GPSGAGKT) lines the ATP pocket.

The protein belongs to the ABC transporter superfamily. Phosphonates importer (TC 3.A.1.9.1) family. In terms of assembly, the complex is composed of two ATP-binding proteins (PhnC), two transmembrane proteins (PhnE) and a solute-binding protein (PhnD).

It localises to the cell inner membrane. The enzyme catalyses phosphonate(out) + ATP + H2O = phosphonate(in) + ADP + phosphate + H(+). Its function is as follows. Part of the ABC transporter complex PhnCDE involved in phosphonates import. Responsible for energy coupling to the transport system. This Pseudomonas syringae pv. tomato (strain ATCC BAA-871 / DC3000) protein is Phosphonates import ATP-binding protein PhnC 1.